The chain runs to 214 residues: Peroxiredoxin-5, mitochondrial (214 aa).

A mitochondrion-targeting transit peptide spans 1 to 52 (MGLAGVCALRRSAGYILVGGAGGQSAAAAARRYSEGEWASGGVRSFSRAAAA). The Thioredoxin domain maps to 56–214 (IKVGDAIPAV…SLAPNIISQL (159 aa)). Position 75 is an N6-acetyllysine (lysine 75). Lysine 83 bears the N6-acetyllysine; alternate mark. An N6-succinyllysine; alternate modification is found at lysine 83. Cysteine 100 (cysteine sulfenic acid (-SOH) intermediate) is an active-site residue. Cysteine 100 carries S-palmitoyl cysteine lipidation. Cysteines 100 and 204 form a disulfide. Position 116 is an N6-succinyllysine (lysine 116). 2 positions are modified to phosphoserine: serine 171 and serine 182. A Microbody targeting signal motif is present at residues 212–214 (SQL).

The protein belongs to the peroxiredoxin family. Prx5 subfamily. Monomer. S-palmitoylated. Palmitoylation occurs on the active site, inhibiting its reactivity; therefore PRDX5 palmitoylation status determines its antioxidant capacity. In terms of processing, S-palmitoylated. Depalmitoylated by ABHD10. In terms of tissue distribution, widely expressed.

It is found in the mitochondrion. Its subcellular location is the cytoplasm. The protein localises to the peroxisome matrix. It carries out the reaction a hydroperoxide + [thioredoxin]-dithiol = an alcohol + [thioredoxin]-disulfide + H2O. Functionally, thiol-specific peroxidase that catalyzes the reduction of hydrogen peroxide and organic hydroperoxides to water and alcohols, respectively. Plays a role in cell protection against oxidative stress by detoxifying peroxides and as sensor of hydrogen peroxide-mediated signaling events. The polypeptide is Peroxiredoxin-5, mitochondrial (Homo sapiens (Human)).